Reading from the N-terminus, the 550-residue chain is Cytochrome P450 monooxygenase FFUJ_09176 (550 aa).

A signal peptide spans 1–31 (MLQTIPMPSRELTIALAVLSLLMVLVQRAGS). Positions 430 to 441 (FIPERFEGDTRS) are enriched in basic and acidic residues. The tract at residues 430–451 (FIPERFEGDTRSSQESAASPDV) is disordered. Heme is bound at residue Cys-466.

The protein belongs to the cytochrome P450 family.

In terms of biological role, cytochrome P450 monooxygenase; part of the DMATS1 gene cluster that mediates the biosynthesis of a reversely N-prenylated monomeric L-tryptophan (r-N-DMAT). Seems not to contribute to the final DMATS1 product. The chain is Cytochrome P450 monooxygenase FFUJ_09176 from Gibberella fujikuroi (strain CBS 195.34 / IMI 58289 / NRRL A-6831) (Bakanae and foot rot disease fungus).